Consider the following 122-residue polypeptide: MIQMQSTLDVACNSGARRVQCIKVLGGSHRRYAGIGDIIKVSVKEAIPRGKAKKGDVYSAVVVRTKKGVRRPDGSVIRFDRNAAVLLNANNAPIGTRIFGPVTRELRNEQFMKIVSLAPEVL.

Belongs to the universal ribosomal protein uL14 family. In terms of assembly, part of the 50S ribosomal subunit. Forms a cluster with proteins L3 and L19. In the 70S ribosome, L14 and L19 interact and together make contacts with the 16S rRNA in bridges B5 and B8.

Its function is as follows. Binds to 23S rRNA. Forms part of two intersubunit bridges in the 70S ribosome. The sequence is that of Large ribosomal subunit protein uL14 from Shewanella sediminis (strain HAW-EB3).